A 563-amino-acid polypeptide reads, in one-letter code: Probable CoA ligase CCL11 (563 aa).

Residues 195 to 203 (TSGTTSSPK), 328 to 333 (HGYGMT), Asp426, 438 to 441 (IKDR), and Lys534 contribute to the ATP site. An SBD1 region spans residues 263 to 328 (DGEIIFNLIR…TESLGFVISH (66 aa)). The SBD2 stretch occupies residues 329–405 (GYGMTEMLGV…LKGSSIMLGY (77 aa)).

Belongs to the ATP-dependent AMP-binding enzyme family.

Its subcellular location is the cytoplasm. It localises to the cytosol. The protein is Probable CoA ligase CCL11 of Humulus lupulus (European hop).